We begin with the raw amino-acid sequence, 208 residues long: Histone H1.3 (208 aa).

Serine 2 carries the N-acetylserine modification. One can recognise an H15 domain in the interval alanine 37–glutamate 113. Residues glutamate 113–threonine 208 form a disordered region. Basic residues-rich tracts occupy residues lysine 148–lysine 158 and lysine 165–proline 191. Low complexity predominate over residues lysine 192–threonine 208.

Belongs to the histone H1/H5 family.

The protein resides in the nucleus. It localises to the chromosome. Functionally, histones H1 are necessary for the condensation of nucleosome chains into higher-order structures. This is Histone H1.3 (hil-3) from Caenorhabditis elegans.